Consider the following 459-residue polypeptide: Serine permease SerP1 (459 aa).

12 helical membrane-spanning segments follow: residues 19 to 39, 42 to 62, 97 to 117, 119 to 139, 153 to 173, 212 to 232, 254 to 274, 281 to 301, 341 to 361, 370 to 390, 412 to 432, and 436 to 456; these read IQLI…AGKT, MTGP…FFFL, SYWL…GTYI, FWLP…LLFG, FWFA…AIIL, FVGA…IGMT, ILLF…WHYI, FVIV…NFVV, AGIP…APVL, AFNF…FITL, PTIA…SLFF, and TFYP…YSHF.

Belongs to the amino acid-polyamine-organocation (APC) superfamily. Amino acid transporter (AAT) (TC 2.A.3.1) family.

It localises to the cell membrane. Its function is as follows. Transports L-serine, L-threonine and L-cysteine with high affinity. Stereoselective, with a strong preference for L-serine. Is the main L-serine transporter and is responsible for optimal growth in media containing free amino acids as the sole source of amino acids. Is also the main transporter for L-threonine. The protein is Serine permease SerP1 of Lactococcus lactis subsp. cremoris (strain MG1363).